Consider the following 282-residue polypeptide: UDP-N-acetylenolpyruvoylglucosamine reductase (282 aa).

In terms of domain architecture, FAD-binding PCMH-type spans 15 to 179; sequence IKSFAKYVYF…LSAEFEFEYK (165 aa). Arginine 157 is a catalytic residue. Serine 207 functions as the Proton donor in the catalytic mechanism. Residue glutamate 278 is part of the active site.

Belongs to the MurB family. It depends on FAD as a cofactor.

It localises to the cytoplasm. It carries out the reaction UDP-N-acetyl-alpha-D-muramate + NADP(+) = UDP-N-acetyl-3-O-(1-carboxyvinyl)-alpha-D-glucosamine + NADPH + H(+). It participates in cell wall biogenesis; peptidoglycan biosynthesis. Its function is as follows. Cell wall formation. The chain is UDP-N-acetylenolpyruvoylglucosamine reductase from Francisella tularensis subsp. tularensis (strain SCHU S4 / Schu 4).